Here is a 145-residue protein sequence, read N- to C-terminus: D-aminoacyl-tRNA deacylase (145 aa).

The Gly-cisPro motif, important for rejection of L-amino acids signature appears at Gly137–Pro138.

Belongs to the DTD family. As to quaternary structure, homodimer.

The protein localises to the cytoplasm. The catalysed reaction is glycyl-tRNA(Ala) + H2O = tRNA(Ala) + glycine + H(+). It catalyses the reaction a D-aminoacyl-tRNA + H2O = a tRNA + a D-alpha-amino acid + H(+). An aminoacyl-tRNA editing enzyme that deacylates mischarged D-aminoacyl-tRNAs. Also deacylates mischarged glycyl-tRNA(Ala), protecting cells against glycine mischarging by AlaRS. Acts via tRNA-based rather than protein-based catalysis; rejects L-amino acids rather than detecting D-amino acids in the active site. By recycling D-aminoacyl-tRNA to D-amino acids and free tRNA molecules, this enzyme counteracts the toxicity associated with the formation of D-aminoacyl-tRNA entities in vivo and helps enforce protein L-homochirality. The chain is D-aminoacyl-tRNA deacylase from Alcanivorax borkumensis (strain ATCC 700651 / DSM 11573 / NCIMB 13689 / SK2).